Here is a 72-residue protein sequence, read N- to C-terminus: Conorfamide-Tx2 (72 aa).

Residues 1-19 (MSGRGFLLLALLLLVTVEA) form the signal peptide. Residues 20 to 25 (TRVEKK) constitute a propeptide that is removed on maturation. Residues 32-39 (AWSGPRNR) are positively charged region crucial for activity against MRGPRX1 receptors. An Isoleucine amide modification is found at I43. A propeptide spanning residues 44–72 (GRRDMQSPLLSERLRFRALGFRQPSSQKQ) is cleaved from the precursor.

This sequence belongs to the FARP (FMRFamide related peptide) family. Expressed by the venom duct.

It localises to the secreted. Its function is as follows. This peptide activates human sensory neuron-specific G-protein coupled receptors MRGPRX1, but not mouse receptors (EC(50)=0.54 uM). Compared with the agonist chloroquine (anti-malaria drug), it is 600-fold more potent. In vivo, induces itch sensation, since intradermal cheek injection into humanized transgenic mouse (mouse MRGPRX1 replaced by human MRGPRX1) induces scratching. In vivo, treatment of zebrafish larvae with high doses (10 uM) induces hypoactivity at the beginning of the experiment during the dark phase and hyperactivity in the strobe phase after one hour, even after the removal of the toxin from the solution. This chain is Conorfamide-Tx2, found in Conus textile (Cloth-of-gold cone).